The sequence spans 171 residues: Protein-export protein SecB (171 aa).

This sequence belongs to the SecB family. Homotetramer, a dimer of dimers. One homotetramer interacts with 1 SecA dimer.

Its subcellular location is the cytoplasm. One of the proteins required for the normal export of preproteins out of the cell cytoplasm. It is a molecular chaperone that binds to a subset of precursor proteins, maintaining them in a translocation-competent state. It also specifically binds to its receptor SecA. The polypeptide is Protein-export protein SecB (Xanthomonas oryzae pv. oryzae (strain MAFF 311018)).